A 138-amino-acid polypeptide reads, in one-letter code: Large ribosomal subunit protein uL16 (138 aa).

The protein belongs to the universal ribosomal protein uL16 family. Part of the 50S ribosomal subunit.

Binds 23S rRNA and is also seen to make contacts with the A and possibly P site tRNAs. The chain is Large ribosomal subunit protein uL16 from Rubrobacter xylanophilus (strain DSM 9941 / JCM 11954 / NBRC 16129 / PRD-1).